The following is a 49-amino-acid chain: Large ribosomal subunit protein bL36 (49 aa).

It belongs to the bacterial ribosomal protein bL36 family.

The sequence is that of Large ribosomal subunit protein bL36 from Pseudomonas fluorescens (strain ATCC BAA-477 / NRRL B-23932 / Pf-5).